The chain runs to 829 residues: Periplasmic nitrate reductase (829 aa).

The tat-type signal signal peptide spans Met-1–Ala-29. A 4Fe-4S Mo/W bis-MGD-type domain is found at Ile-41–Asp-97. Cys-48, Cys-51, Cys-55, and Cys-83 together coordinate [4Fe-4S] cluster. Mo-bis(molybdopterin guanine dinucleotide) contacts are provided by residues Lys-85, Gln-152, Asn-177, Cys-181, Trp-214–Met-221, Ser-245–His-249, Gln-264–Asp-266, Met-374, Gln-378, Asn-484, Ser-510–Asp-511, Lys-533, Asp-560, and Thr-718–Thr-727. Phe-794 serves as a coordination point for substrate. Mo-bis(molybdopterin guanine dinucleotide) contacts are provided by Asn-802 and Lys-819.

The protein belongs to the prokaryotic molybdopterin-containing oxidoreductase family. NasA/NapA/NarB subfamily. In terms of assembly, component of the periplasmic nitrate reductase NapAB complex composed of NapA and NapB. It depends on [4Fe-4S] cluster as a cofactor. Mo-bis(molybdopterin guanine dinucleotide) is required as a cofactor. Predicted to be exported by the Tat system. The position of the signal peptide cleavage has not been experimentally proven.

Its subcellular location is the periplasm. The enzyme catalyses 2 Fe(II)-[cytochrome] + nitrate + 2 H(+) = 2 Fe(III)-[cytochrome] + nitrite + H2O. Catalytic subunit of the periplasmic nitrate reductase complex NapAB. Receives electrons from NapB and catalyzes the reduction of nitrate to nitrite. This chain is Periplasmic nitrate reductase, found in Vibrio atlanticus (strain LGP32) (Vibrio splendidus (strain Mel32)).